Here is a 429-residue protein sequence, read N- to C-terminus: Adenylosuccinate synthetase (429 aa).

Residues 15-21 (GDEGKGK) and 43-45 (GHV) contribute to the GTP site. Residue Asp-16 is the Proton acceptor of the active site. Positions 16 and 43 each coordinate Mg(2+). Residues 16–19 (DEGK), 41–44 (NAGH), Thr-131, Arg-145, Gln-225, Thr-240, and Arg-304 each bind IMP. The Proton donor role is filled by His-44. Residue 300–306 (SNTKRPR) coordinates substrate. Residues Arg-306, 332–334 (LLD), and 414–416 (SVG) contribute to the GTP site.

It belongs to the adenylosuccinate synthetase family. In terms of assembly, homodimer. Mg(2+) is required as a cofactor.

It is found in the cytoplasm. The enzyme catalyses IMP + L-aspartate + GTP = N(6)-(1,2-dicarboxyethyl)-AMP + GDP + phosphate + 2 H(+). Its pathway is purine metabolism; AMP biosynthesis via de novo pathway; AMP from IMP: step 1/2. Its function is as follows. Plays an important role in the de novo pathway of purine nucleotide biosynthesis. Catalyzes the first committed step in the biosynthesis of AMP from IMP. This Mesoplasma florum (strain ATCC 33453 / NBRC 100688 / NCTC 11704 / L1) (Acholeplasma florum) protein is Adenylosuccinate synthetase.